The chain runs to 277 residues: Bleomycin hydrolase (277 aa).

Residue Cys-53 is part of the active site.

The protein belongs to the peptidase C1 family. As to quaternary structure, homohexamer. Interacts with NUDT12 (via ANK repeats).

The protein localises to the cytoplasm. The protein resides in the cytoplasmic granule. The enzyme catalyses Inactivates bleomycin B2 (a cytotoxic glycometallopeptide) by hydrolysis of a carboxyamide bond of beta-aminoalanine, but also shows general aminopeptidase activity. The specificity varies somewhat with source, but amino acid arylamides of Met, Leu and Ala are preferred.. With respect to regulation, strongly inhibited by leupeptin, puromycin, NEM, and divalent cations. In terms of biological role, the normal physiological role of BLM hydrolase is unknown, but it catalyzes the inactivation of the antitumor drug BLM (a glycopeptide) by hydrolyzing the carboxamide bond of its B-aminoalaninamide moiety thus protecting normal and malignant cells from BLM toxicity. This is Bleomycin hydrolase (BLMH) from Oryctolagus cuniculus (Rabbit).